The primary structure comprises 387 residues: Phosphoglycerate kinase (387 aa).

Substrate-binding positions include 21 to 23 (DLN), arginine 36, and 59 to 62 (HLGR). At lysine 84 the chain carries N6-acetyllysine. Arginine 113 and arginine 146 together coordinate substrate. Residues lysine 197, glutamate 314, and 340 to 343 (GGDT) contribute to the ATP site.

This sequence belongs to the phosphoglycerate kinase family. As to quaternary structure, monomer.

It localises to the cytoplasm. The catalysed reaction is (2R)-3-phosphoglycerate + ATP = (2R)-3-phospho-glyceroyl phosphate + ADP. It functions in the pathway carbohydrate degradation; glycolysis; pyruvate from D-glyceraldehyde 3-phosphate: step 2/5. The polypeptide is Phosphoglycerate kinase (Escherichia coli O139:H28 (strain E24377A / ETEC)).